A 673-amino-acid polypeptide reads, in one-letter code: Glycine--tRNA ligase beta subunit (673 aa).

Belongs to the class-II aminoacyl-tRNA synthetase family. In terms of assembly, tetramer of two alpha and two beta subunits.

The protein localises to the cytoplasm. The enzyme catalyses tRNA(Gly) + glycine + ATP = glycyl-tRNA(Gly) + AMP + diphosphate. The chain is Glycine--tRNA ligase beta subunit from Lactococcus lactis subsp. cremoris (strain MG1363).